We begin with the raw amino-acid sequence, 254 residues long: 3-deoxy-manno-octulosonate cytidylyltransferase (254 aa).

The protein belongs to the KdsB family.

Its subcellular location is the cytoplasm. The enzyme catalyses 3-deoxy-alpha-D-manno-oct-2-ulosonate + CTP = CMP-3-deoxy-beta-D-manno-octulosonate + diphosphate. The protein operates within nucleotide-sugar biosynthesis; CMP-3-deoxy-D-manno-octulosonate biosynthesis; CMP-3-deoxy-D-manno-octulosonate from 3-deoxy-D-manno-octulosonate and CTP: step 1/1. Its pathway is bacterial outer membrane biogenesis; lipopolysaccharide biosynthesis. In terms of biological role, activates KDO (a required 8-carbon sugar) for incorporation into bacterial lipopolysaccharide in Gram-negative bacteria. The sequence is that of 3-deoxy-manno-octulosonate cytidylyltransferase from Pseudomonas paraeruginosa (strain DSM 24068 / PA7) (Pseudomonas aeruginosa (strain PA7)).